The primary structure comprises 41 residues: Large ribosomal subunit protein bL36 (41 aa).

It belongs to the bacterial ribosomal protein bL36 family.

This is Large ribosomal subunit protein bL36 from Sinorhizobium medicae (strain WSM419) (Ensifer medicae).